We begin with the raw amino-acid sequence, 530 residues long: FSD1-like protein (530 aa).

Met1 carries the N-acetylmethionine modification. A coiled-coil region spans residues 102–141; that stretch reads KQEQARKSQELQSQISQCNNALENSEELLEFATRSLDIKE. Residues 137–194 form the COS domain; the sequence is LDIKEPEEFSKAARQIKDRVTMASAFRLSLKPKVSDNMTHLMVDFSQERQMLQTLKFL. In terms of domain architecture, Fibronectin type-III spans 196–300; sequence VPKAPEIDPV…DPVTLETKAL (105 aa). A B30.2/SPRY domain is found at 300-506; that stretch reads LNFNLDNSSS…LSTGMQVPSA (207 aa). The segment at 322 to 366 is disordered; it reads WDPTGGKGQESKIKGKENKGRSGTPSPKRTSVGSRPPAVRGSRDR. The segment covering 330–341 has biased composition (basic and acidic residues); the sequence is QESKIKGKENKG. Over residues 342-354 the composition is skewed to polar residues; sequence RSGTPSPKRTSVG. Residues Ser520 and Ser523 each carry the phosphoserine modification.

The sequence is that of FSD1-like protein (FSD1L) from Homo sapiens (Human).